Consider the following 187-residue polypeptide: Acireductone dioxygenase (187 aa).

Fe(2+) contacts are provided by His87, His89, Glu93, and His136. Ni(2+) is bound by residues His87, His89, Glu93, and His136.

Belongs to the acireductone dioxygenase (ARD) family. It depends on Fe(2+) as a cofactor. Ni(2+) is required as a cofactor.

The protein localises to the cytoplasm. The protein resides in the nucleus. It catalyses the reaction 1,2-dihydroxy-5-(methylsulfanyl)pent-1-en-3-one + O2 = 4-methylsulfanyl-2-oxobutanoate + formate + 2 H(+). The catalysed reaction is 1,2-dihydroxy-5-(methylsulfanyl)pent-1-en-3-one + O2 = 3-(methylsulfanyl)propanoate + CO + formate + 2 H(+). It participates in amino-acid biosynthesis; L-methionine biosynthesis via salvage pathway; L-methionine from S-methyl-5-thio-alpha-D-ribose 1-phosphate: step 5/6. In terms of biological role, catalyzes 2 different reactions between oxygen and the acireductone 1,2-dihydroxy-3-keto-5-methylthiopentene (DHK-MTPene) depending upon the metal bound in the active site. Fe-containing acireductone dioxygenase (Fe-ARD) produces formate and 2-keto-4-methylthiobutyrate (KMTB), the alpha-ketoacid precursor of methionine in the methionine recycle pathway. Ni-containing acireductone dioxygenase (Ni-ARD) produces methylthiopropionate, carbon monoxide and formate, and does not lie on the methionine recycle pathway. This Cryptococcus neoformans var. neoformans serotype D (strain JEC21 / ATCC MYA-565) (Filobasidiella neoformans) protein is Acireductone dioxygenase.